A 368-amino-acid polypeptide reads, in one-letter code: DNA replication and repair protein RecF (368 aa).

An ATP-binding site is contributed by 30–37 (GRNGSGKT).

The protein belongs to the RecF family.

The protein resides in the cytoplasm. In terms of biological role, the RecF protein is involved in DNA metabolism; it is required for DNA replication and normal SOS inducibility. RecF binds preferentially to single-stranded, linear DNA. It also seems to bind ATP. This Chlorobaculum parvum (strain DSM 263 / NCIMB 8327) (Chlorobium vibrioforme subsp. thiosulfatophilum) protein is DNA replication and repair protein RecF.